The chain runs to 547 residues: MFS-type transporter ungB (547 aa).

14 helical membrane passes run Leu14–Leu34, Asp50–Gly70, Trp80–Pro100, Ile111–Ile131, Ile138–Gly158, Trp169–Leu189, Leu210–Gly230, Ser238–Val258, Leu279–Leu299, Leu316–Val336, Thr343–Leu363, Ala366–Gly386, Val392–Phe412, and Ala475–Ala495. The interval Pro503–Lys547 is disordered. The span at Gly504–Gly514 shows a compositional bias: basic and acidic residues.

Belongs to the major facilitator superfamily. TCR/Tet family.

Its subcellular location is the membrane. In terms of biological role, MFS-type transporter; part of the gene cluster that mediates the biosynthesis of the unguisins, gamma-aminobutyric acid (GABA)-containing fungal cyclic heptapeptides with the amino acid sequence cyclo-(D-Ala1-D-Val2-L-Phe3-D-Val4-D-Ala5-D-Trp6-GABA7) for unguisin A and cyclo-(D-Ala1-D-Val2-L-Leu3-D-Val4-D-Ala5-D-Trp6-GABA7) for unguisin B. May be involved in the secretion of unguisins. The sequence is that of MFS-type transporter ungB from Aspergillus violaceofuscus (strain CBS 115571).